We begin with the raw amino-acid sequence, 595 residues long: Elongation factor 4 (595 aa).

The 182-residue stretch at 2–183 (KNIRNFCIIA…AIVEQVPAPA (182 aa)) folds into the tr-type G domain. Residues 14–19 (DHGKST) and 130–133 (NKVD) contribute to the GTP site.

This sequence belongs to the TRAFAC class translation factor GTPase superfamily. Classic translation factor GTPase family. LepA subfamily.

The protein localises to the cell inner membrane. The catalysed reaction is GTP + H2O = GDP + phosphate + H(+). Functionally, required for accurate and efficient protein synthesis under certain stress conditions. May act as a fidelity factor of the translation reaction, by catalyzing a one-codon backward translocation of tRNAs on improperly translocated ribosomes. Back-translocation proceeds from a post-translocation (POST) complex to a pre-translocation (PRE) complex, thus giving elongation factor G a second chance to translocate the tRNAs correctly. Binds to ribosomes in a GTP-dependent manner. The sequence is that of Elongation factor 4 from Porphyromonas gingivalis (strain ATCC 33277 / DSM 20709 / CIP 103683 / JCM 12257 / NCTC 11834 / 2561).